We begin with the raw amino-acid sequence, 202 residues long: Na(+)-translocating NADH-quinone reductase subunit E (202 aa).

The next 6 helical transmembrane spans lie at 11–31 (AVFI…FIAI), 35–55 (VETA…TVPA), 79–99 (LSFL…QILE), 114–134 (GVFL…LFMV), 144–164 (VVYG…LAGI), and 180–200 (LGIT…FSGV).

Belongs to the NqrDE/RnfAE family. As to quaternary structure, composed of six subunits; NqrA, NqrB, NqrC, NqrD, NqrE and NqrF.

The protein localises to the cell inner membrane. It catalyses the reaction a ubiquinone + n Na(+)(in) + NADH + H(+) = a ubiquinol + n Na(+)(out) + NAD(+). Its function is as follows. NQR complex catalyzes the reduction of ubiquinone-1 to ubiquinol by two successive reactions, coupled with the transport of Na(+) ions from the cytoplasm to the periplasm. NqrA to NqrE are probably involved in the second step, the conversion of ubisemiquinone to ubiquinol. This is Na(+)-translocating NADH-quinone reductase subunit E from Stutzerimonas stutzeri (strain A1501) (Pseudomonas stutzeri).